We begin with the raw amino-acid sequence, 920 residues long: DNA ligase (920 aa).

NAD(+)-binding positions include 90 to 94 (DAAYD), 139 to 140 (SL), and E173. K175 functions as the N6-AMP-lysine intermediate in the catalytic mechanism. Residues R196, E235, K360, and K384 each contribute to the NAD(+) site. Zn(2+) is bound by residues C481, C484, C500, and C506. The segment at 659 to 691 (RAQGEAAIESAETQGDTASETTGAPTGAEAPLG) is disordered. Residues 669-682 (AETQGDTASETTGA) are compositionally biased toward polar residues. The region spanning 839–920 (SLPQTLAGKT…FAQLLATGTI (82 aa)) is the BRCT domain.

Belongs to the NAD-dependent DNA ligase family. LigA subfamily. It depends on Mg(2+) as a cofactor. Requires Mn(2+) as cofactor.

It carries out the reaction NAD(+) + (deoxyribonucleotide)n-3'-hydroxyl + 5'-phospho-(deoxyribonucleotide)m = (deoxyribonucleotide)n+m + AMP + beta-nicotinamide D-nucleotide.. DNA ligase that catalyzes the formation of phosphodiester linkages between 5'-phosphoryl and 3'-hydroxyl groups in double-stranded DNA using NAD as a coenzyme and as the energy source for the reaction. It is essential for DNA replication and repair of damaged DNA. The protein is DNA ligase of Bifidobacterium longum (strain NCC 2705).